A 334-amino-acid chain; its full sequence is MRFVDEVVIKLQAGKGGNGCVSFRREKYVPCGGPDGGDGGNGGSIYLKADENVNTLIDYRYKREYYAENGRPGEGRNCYGKAGEDLYLVVPVGTSVFDIDTNKKIGEVLQHGQTFKLVSGGKRGIGNTHFKSSTNQAPRKFTLGEEGEYKEVRLELNLLADVALLGLPNAGKSTLIRSVSEATPKVADYPFTTMYPHLGVVKVGVDSFVMADIPGVIEGAAEGAGLGLRFLKHLTRARCVLHVVDICPFNESDPVENYFAVEKELEKYSQELFDKLRFLVINKIDLLADKVEQKCQEFVEQIGYQGNYYTISAAMKKGTDELAKKLNEFLQKQE.

The region spanning 1-159 (MRFVDEVVIK…KEVRLELNLL (159 aa)) is the Obg domain. Residues 160–331 (ADVALLGLPN…LAKKLNEFLQ (172 aa)) enclose the OBG-type G domain. GTP-binding positions include 166–173 (GLPNAGKS), 191–195 (FTTMY), 212–215 (DIPG), 282–285 (NKID), and 312–314 (SAA). 2 residues coordinate Mg(2+): Ser173 and Thr193.

Belongs to the TRAFAC class OBG-HflX-like GTPase superfamily. OBG GTPase family. Monomer. Requires Mg(2+) as cofactor.

It localises to the cytoplasm. An essential GTPase which binds GTP, GDP and possibly (p)ppGpp with moderate affinity, with high nucleotide exchange rates and a fairly low GTP hydrolysis rate. Plays a role in control of the cell cycle, stress response, ribosome biogenesis and in those bacteria that undergo differentiation, in morphogenesis control. The protein is GTPase Obg of Francisella tularensis subsp. holarctica (strain FTNF002-00 / FTA).